Consider the following 333-residue polypeptide: D-fructose 1,6-bisphosphatase class 2/sedoheptulose 1,7-bisphosphatase (333 aa).

Positions 33, 57, 85, and 88 each coordinate Mn(2+). Substrate is bound by residues 88-90 (EGT), Tyr-119, 164-166 (RTR), and 186-188 (DGD). Glu-213 lines the Mn(2+) pocket.

It belongs to the FBPase class 2 family. As to quaternary structure, homotetramer. It depends on Mn(2+) as a cofactor.

It carries out the reaction beta-D-fructose 1,6-bisphosphate + H2O = beta-D-fructose 6-phosphate + phosphate. The catalysed reaction is D-sedoheptulose 1,7-bisphosphate + H2O = D-sedoheptulose 7-phosphate + phosphate. Its pathway is carbohydrate biosynthesis; Calvin cycle. Functionally, catalyzes the hydrolysis of fructose 1,6-bisphosphate (Fru 1,6-P2) and sedoheptulose 1,7-bisphosphate (Sed 1,7-P2) to fructose 6-phosphate and sedoheptulose 7-phosphate, respectively. The polypeptide is D-fructose 1,6-bisphosphatase class 2/sedoheptulose 1,7-bisphosphatase (Prochlorococcus marinus (strain AS9601)).